Consider the following 20-residue polypeptide: 2-oxo-acid reductase (20 aa).

The protein belongs to the AOR/FOR family. As to quaternary structure, forms various types of homooligomers. The cofactor is [4Fe-4S] cluster. Mo-molybdopterin serves as cofactor.

The protein localises to the cell membrane. It catalyses the reaction a (2R)-2-hydroxycarboxylate + A = a 2-oxocarboxylate + AH2. Its activity is regulated as follows. Is inhibited by cyanide. Is sensitive to oxygen. In terms of biological role, oxidoreductase with an extremely broad substrate specificity that can reduce reversibly 2-oxocarboxylates to (2R)-hydroxycarboxylates. This chain is 2-oxo-acid reductase, found in Proteus hauseri.